The following is a 398-amino-acid chain: Small ribosomal subunit protein uS3m (398 aa).

It belongs to the universal ribosomal protein uS3 family. In terms of assembly, component of the mitochondrial small ribosomal subunit (mt-SSU). Mature yeast 74S mitochondrial ribosomes consist of a small (37S) and a large (54S) subunit. The 37S small subunit contains a 15S ribosomal RNA (15S mt-rRNA) and 34 different proteins. The 54S large subunit contains a 21S rRNA (21S mt-rRNA) and 46 different proteins. uS3m, uS4m and uS5m form the narrow entry site of the mRNA channel.

The protein localises to the mitochondrion. Its function is as follows. Component of the mitochondrial ribosome (mitoribosome), a dedicated translation machinery responsible for the synthesis of mitochondrial genome-encoded proteins, including at least some of the essential transmembrane subunits of the mitochondrial respiratory chain. The mitoribosomes are attached to the mitochondrial inner membrane and translation products are cotranslationally integrated into the membrane. uS3m is essential for mitochondrial protein synthesis and required for the maturation of small ribosomal subunits. The sequence is that of Small ribosomal subunit protein uS3m (VAR1) from Saccharomyces cerevisiae (strain ATCC 204508 / S288c) (Baker's yeast).